A 456-amino-acid chain; its full sequence is Exodeoxyribonuclease 7 large subunit (456 aa).

Belongs to the XseA family. Heterooligomer composed of large and small subunits.

The protein localises to the cytoplasm. The enzyme catalyses Exonucleolytic cleavage in either 5'- to 3'- or 3'- to 5'-direction to yield nucleoside 5'-phosphates.. In terms of biological role, bidirectionally degrades single-stranded DNA into large acid-insoluble oligonucleotides, which are then degraded further into small acid-soluble oligonucleotides. The protein is Exodeoxyribonuclease 7 large subunit of Lactobacillus gasseri (strain ATCC 33323 / DSM 20243 / BCRC 14619 / CIP 102991 / JCM 1131 / KCTC 3163 / NCIMB 11718 / NCTC 13722 / AM63).